The following is a 355-amino-acid chain: DnaJ homolog dnj-20 (355 aa).

The N-terminal stretch at 1 to 21 (MRILNVSLLVLASSLVAFVEC) is a signal peptide. Positions 24–89 (DFYKILGVAK…EKRAMYDRHG (66 aa)) constitute a J domain.

This Caenorhabditis elegans protein is DnaJ homolog dnj-20.